Here is a 419-residue protein sequence, read N- to C-terminus: Tyrosine--tRNA ligase (419 aa).

An L-tyrosine-binding site is contributed by Tyr34. The 'HIGH' region motif lies at 39-48; it reads PTADSLHIGH. The L-tyrosine site is built by Tyr169, Gln173, and Asp176. The short motif at 230-234 is the 'KMSKS' region element; sequence KFGKT. Residue Lys233 coordinates ATP. Residues 352–419 form the S4 RNA-binding domain; that stretch reads VPLVELLVSA…KKKYYLIRYA (68 aa).

This sequence belongs to the class-I aminoacyl-tRNA synthetase family. TyrS type 1 subfamily. In terms of assembly, homodimer.

The protein resides in the cytoplasm. The catalysed reaction is tRNA(Tyr) + L-tyrosine + ATP = L-tyrosyl-tRNA(Tyr) + AMP + diphosphate + H(+). Its function is as follows. Catalyzes the attachment of tyrosine to tRNA(Tyr) in a two-step reaction: tyrosine is first activated by ATP to form Tyr-AMP and then transferred to the acceptor end of tRNA(Tyr). This Geobacillus stearothermophilus (Bacillus stearothermophilus) protein is Tyrosine--tRNA ligase (tyrS).